The following is a 732-amino-acid chain: E3 ubiquitin-protein ligase RNF19B (732 aa).

Residues 1-109 form a disordered region; sequence MGSEKDSESP…PEEDEAAEGG (109 aa). Residues 1–315 form a required for ubiquitin ligase activity and for protection against staurosporin-induced cell death region; the sequence is MGSEKDSESP…VCGCEFCWLC (315 aa). Over residues 54-71 the composition is skewed to pro residues; sequence AEPPPPAAPPPPPPPAPA. A compositionally biased stretch (low complexity) spans 72 to 99; that stretch reads PVEAQAPPVEALPSEPAAEAEAEAVAAG. Positions 100–109 are enriched in acidic residues; that stretch reads PEEDEAAEGG. The interval 112–334 is TRIAD supradomain; sequence EEVECPLCLV…LSPSGCTFWG (223 aa). Positions 116, 119, 139, 142, 203, 208, 225, 230, 235, 238, 243, 248, 284, and 287 each coordinate Zn(2+). The RING-type 1 zinc finger occupies 116-165; that stretch reads CPLCLVRLPPERAPRLLSCPHRSCRDCLRHYLRLEISESRVPISCPECSE. An IBR-type zinc finger spans residues 183–248; sequence HKYEEFMLRR…KQIWHPNQTC (66 aa). The RING-type 2; atypical zinc finger occupies 284-315; that stretch reads CPRCSAYIIKMNDGSCNHMTCAVCGCEFCWLC. The active site involves Cys299. Zn(2+) contacts are provided by Cys304, Cys307, Cys312, Cys315, His323, and Cys330. 2 consecutive transmembrane segments (helical) span residues 351–371 and 412–432; these read LIGA…AMVI and VIAA…VYGV. Disordered regions lie at residues 598–644 and 660–732; these read QLVS…QSCE and QPES…YEVE. Positions 674–683 are enriched in acidic residues; it reads QSDDVPDITS.

It belongs to the RBR family. RNF19 subfamily. As to quaternary structure, interacts with UBE2L3, UBE2L6 and UCKL1. Expressed specifically in natural killer cells, activated macrophages and cytotoxic T-cells. Present in macrophages (at protein level). Ubiquitously expressed with high expression in testis.

Its subcellular location is the cytoplasmic granule membrane. It localises to the endoplasmic reticulum membrane. The enzyme catalyses [E2 ubiquitin-conjugating enzyme]-S-ubiquitinyl-L-cysteine + [acceptor protein]-L-lysine = [E2 ubiquitin-conjugating enzyme]-L-cysteine + [acceptor protein]-N(6)-ubiquitinyl-L-lysine.. It participates in protein modification; protein ubiquitination. E3 ubiquitin-protein ligase which accepts ubiquitin from E2 ubiquitin-conjugating enzymes UBE2L3 and UBE2L6 in the form of a thioester and then directly transfers the ubiquitin to targeted substrates, such as UCKL1. Involved in the cytolytic activity of natural killer cells and cytotoxic T-cells. Protects against staurosporin-induced cell death. In Mus musculus (Mouse), this protein is E3 ubiquitin-protein ligase RNF19B (Rnf19b).